The sequence spans 159 residues: Putative ribosomal RNA large subunit methyltransferase H (159 aa).

S-adenosyl-L-methionine-binding positions include leucine 76, glycine 108, and 127-132; that span reads FSKMTF.

The protein belongs to the RNA methyltransferase RlmH family.

Its subcellular location is the cytoplasm. The enzyme catalyses pseudouridine(1915) in 23S rRNA + S-adenosyl-L-methionine = N(3)-methylpseudouridine(1915) in 23S rRNA + S-adenosyl-L-homocysteine + H(+). Functionally, specifically methylates the pseudouridine at position 1915 (m3Psi1915) in 23S rRNA. This Methanococcus maripaludis (strain DSM 14266 / JCM 13030 / NBRC 101832 / S2 / LL) protein is Putative ribosomal RNA large subunit methyltransferase H.